We begin with the raw amino-acid sequence, 441 residues long: Trigger factor (441 aa).

Residues 161-246 (GDQVTIDFVG…VSEVAEQILP (86 aa)) form the PPIase FKBP-type domain.

It belongs to the FKBP-type PPIase family. Tig subfamily.

The protein localises to the cytoplasm. The enzyme catalyses [protein]-peptidylproline (omega=180) = [protein]-peptidylproline (omega=0). In terms of biological role, involved in protein export. Acts as a chaperone by maintaining the newly synthesized protein in an open conformation. Functions as a peptidyl-prolyl cis-trans isomerase. This chain is Trigger factor, found in Marinomonas sp. (strain MWYL1).